Here is a 536-residue protein sequence, read N- to C-terminus: Arylsulfatase (536 aa).

Residues aspartate 13, aspartate 14, and cysteine 51 each coordinate Ca(2+). Catalysis depends on cysteine 51, which acts as the Nucleophile. Position 51 is a 3-oxoalanine (Cys) (cysteine 51). Histidine 115 is an active-site residue. 2 residues coordinate Ca(2+): aspartate 317 and asparagine 318.

Belongs to the sulfatase family. Monomer. Ca(2+) is required as a cofactor. Post-translationally, the conversion to 3-oxoalanine (also known as C-formylglycine, FGly), of a serine or cysteine residue in prokaryotes and of a cysteine residue in eukaryotes, is critical for catalytic activity.

Its subcellular location is the cytoplasm. The catalysed reaction is an aryl sulfate + H2O = a phenol + sulfate + H(+). Hydrolyzes the bond between sulfate and the aromatic ring in a compound such as 4-nitrocatechol sulfate. The chain is Arylsulfatase (atsA) from Pseudomonas aeruginosa (strain ATCC 15692 / DSM 22644 / CIP 104116 / JCM 14847 / LMG 12228 / 1C / PRS 101 / PAO1).